A 471-amino-acid polypeptide reads, in one-letter code: Uronate isomerase (471 aa).

This sequence belongs to the metallo-dependent hydrolases superfamily. Uronate isomerase family.

The enzyme catalyses D-glucuronate = D-fructuronate. The catalysed reaction is aldehydo-D-galacturonate = keto-D-tagaturonate. It participates in carbohydrate metabolism; pentose and glucuronate interconversion. This Latilactobacillus sakei subsp. sakei (strain 23K) (Lactobacillus sakei subsp. sakei) protein is Uronate isomerase.